The chain runs to 582 residues: Arginine--tRNA ligase (582 aa).

The short motif at 128-138 (PNLAKEMHVGH) is the 'HIGH' region element.

It belongs to the class-I aminoacyl-tRNA synthetase family. In terms of assembly, monomer.

Its subcellular location is the cytoplasm. The enzyme catalyses tRNA(Arg) + L-arginine + ATP = L-arginyl-tRNA(Arg) + AMP + diphosphate. This chain is Arginine--tRNA ligase, found in Colwellia psychrerythraea (strain 34H / ATCC BAA-681) (Vibrio psychroerythus).